The chain runs to 440 residues: Beta-1,3-galactosyl-O-glycosyl-glycoprotein beta-1,6-N-acetylglucosaminyltransferase (440 aa).

The Cytoplasmic segment spans residues 1-12 (MKMAGWKKKLCR). The chain crosses the membrane as a helical; Signal-anchor for type II membrane protein span at residues 13 to 30 (GHHLWALGCYMLLAVVSL). At 31–440 (RLSLRFKCDV…RHKAIYGTEL (410 aa)) the chain is on the lumenal side. 2 N-linked (GlcNAc...) asparagine; by host glycosylation sites follow: N72 and N108. 4 cysteine pairs are disulfide-bonded: C73/C230, C164/C384, C185/C212, and C393/C425.

This sequence belongs to the glycosyltransferase 14 family.

It is found in the host Golgi apparatus membrane. The catalysed reaction is a 3-O-[beta-D-galactosyl-(1-&gt;3)-N-acetyl-alpha-D-galactosaminyl]-L-seryl-[protein] + UDP-N-acetyl-alpha-D-glucosamine = 3-O-{beta-D-galactosyl-(1-&gt;3)-[N-acetyl-beta-D-glucosaminyl-(1-&gt;6)]-N-acetyl-alpha-D-galactosaminyl}-L-seryl-[protein] + UDP + H(+). The enzyme catalyses a 3-O-[beta-D-galactosyl-(1-&gt;3)-N-acetyl-alpha-D-galactosaminyl]-L-threonyl-[protein] + UDP-N-acetyl-alpha-D-glucosamine = a 3-O-{beta-D-galactosyl-(1-&gt;3)-[N-acetyl-beta-D-glucosaminyl-(1-&gt;6)]-N-acetyl-alpha-D-galactosaminyl}-L-threonyl-[protein] + UDP + H(+). It carries out the reaction a beta-D-Gal-(1-&gt;4)-beta-D-GlcNAc-(1-&gt;3)-beta-D-Gal-(1-&gt;4)-beta-D-GlcNAc derivative + UDP-N-acetyl-alpha-D-glucosamine = a beta-D-Gal-(1-&gt;4)-beta-D-GlcNAc-(1-&gt;3)-[beta-D-GlcNAc-(1-&gt;6)]-beta-D-Gal-(1-&gt;4)-N-acetyl-beta-D-glucosaminyl derivative + UDP + H(+). It catalyses the reaction 3-O-[N-acetyl-beta-D-glucosaminyl-(1-&gt;3)-N-acetyl-alpha-D-galactosaminyl]-L-seryl-[protein] + UDP-N-acetyl-alpha-D-glucosamine = 3-O-[N-acetyl-beta-D-glucosaminyl-(1-&gt;3)-[N-acetyl-beta-D-glucosaminyl-(1-&gt;6)]-N-acetyl-alpha-D-galactosaminyl]-L-seryl-[protein] + UDP + H(+). The catalysed reaction is a 3-O-[N-acetyl-beta-D-glucosaminyl-(1-&gt;3)-N-acetyl-alpha-D-galactosaminyl]-L-threonyl-[protein] + UDP-N-acetyl-alpha-D-glucosamine = 3-O-[N-acetyl-beta-D-glucosaminyl-(1-&gt;3)-[N-acetyl-beta-D-glucosaminyl-(1-&gt;6)]-N-acetyl-alpha-D-galactosaminyl]-L-threonyl-[protein] + UDP + H(+). Its pathway is protein modification; protein glycosylation. Its function is as follows. Non-essential glycosyltransferase that can synthesize all known mucin beta 6 N-acetylglucosaminides. Mediates core 2 and core 4 O-glycan branching, 2 important steps in mucin-type biosynthesis. Has also I-branching enzyme activity by converting linear into branched poly-N-acetyllactosaminoglycans. Contributes to the post-translational modifications of structural proteins. This Bos taurus (Bovine) protein is Beta-1,3-galactosyl-O-glycosyl-glycoprotein beta-1,6-N-acetylglucosaminyltransferase (Bo17).